A 240-amino-acid polypeptide reads, in one-letter code: Axial regulator YABBY 3 (240 aa).

A C4-type zinc finger spans residues Cys-30–Cys-57. Positions Asp-135–Val-156 are disordered.

This sequence belongs to the YABBY family. As to quaternary structure, interacts with SPL/NZZ. Interacts with SPEAR2. Binds to LUG and LUH; these complexes promote adaxial cell identity in leaves as well as embryonic shoot apical meristem (SAM) initiation and postembryonic SAM maintenance. As to expression, expressed in abaxial regions of lateral aerial organ primordia leading to cotyledons, leaves, flower meristems, sepals, petals, stamen and carpels, but not in roots.

It localises to the nucleus. In terms of biological role, involved in the abaxial cell fate determination during embryogenesis and organogenesis. Regulates the initiation of embryonic shoot apical meristem (SAM) development. Contributes to the repression of KNOX genes (STM, KNAT1/BP and KNAT2) to avoid ectopic meristems. Binds DNA without sequence specificity. The chain is Axial regulator YABBY 3 (YAB3) from Arabidopsis thaliana (Mouse-ear cress).